The primary structure comprises 113 residues: U11-theraphotoxin-Hhn1s (113 aa).

A signal peptide spans 1–21 (MNTVRVTFLLVFVLAVSLGQA). Positions 22-74 (DKDENRMEMQEKTEQGKSYLDFAENLLLQKLEELEAKLLEEDSEESRNSRQKR) are excised as a propeptide. A disordered region spans residues 61-83 (EEDSEESRNSRQKRCIGEGVPCD). Cystine bridges form between Cys-75/Cys-90, Cys-82/Cys-95, and Cys-89/Cys-110.

It belongs to the neurotoxin 14 (magi-1) family. 01 (HNTX-16) subfamily. In terms of tissue distribution, expressed by the venom gland.

The protein localises to the secreted. Functionally, probable ion channel inhibitor. This chain is U11-theraphotoxin-Hhn1s, found in Cyriopagopus hainanus (Chinese bird spider).